Reading from the N-terminus, the 390-residue chain is Ammonium/H(+) antiporter subunit AmhT (390 aa).

Helical transmembrane passes span 2–22 (VIPE…TGFV), 31–51 (VVIF…SHLL), 52–72 (HFAG…EFPL), 94–114 (FGVT…SLII), 143–163 (FMLG…AVLV), 178–198 (LLVV…VFLF), 212–232 (DLFI…ALYL), 266–286 (LLLP…EGIP), 288–308 (IPLL…VGVL), and 351–371 (VFIL…PSIA).

The protein belongs to the monovalent cation:proton antiporter 2 (CPA2) transporter (TC 2.A.37) family. In terms of assembly, interacts with AmhM.

It localises to the cell membrane. With respect to regulation, amhT alone exhibits antiport activity, but interaction with AmhM confers different properties, such as higher KM for potassium. Its function is as follows. Ammonium/proton antiporter that mediates the efflux of ammonium ions. Can also transport potassium or rubidium, but not sodium or lithium. This is Ammonium/H(+) antiporter subunit AmhT (amhT) from Alkalihalophilus pseudofirmus (strain ATCC BAA-2126 / JCM 17055 / OF4) (Bacillus pseudofirmus).